Reading from the N-terminus, the 31-residue chain is Cycloviolacin-O14 (31 aa).

The cyclopeptide (Gly-Asn) cross-link spans 1–31; that stretch reads GSIPACGESCFKGKCYTPGCSCSKYPLCAKN. Intrachain disulfides connect C6–C20, C10–C22, and C15–C28.

In terms of processing, this is a cyclic peptide. In terms of tissue distribution, expressed in leaves and petioles but not in petals, roots and runners (at protein level).

Its function is as follows. Probably participates in a plant defense mechanism. Has hemolytic activity. This chain is Cycloviolacin-O14, found in Viola odorata (Sweet violet).